The primary structure comprises 102 residues: Acid shock protein (102 aa).

Positions 1–21 (MKKVLALVVAAAMGLSSAAFA) are cleaved as a signal peptide. The segment covering 22–41 (AETATTPAPTATTTKAAPAK) has biased composition (low complexity). The propeptide occupies 22-58 (AETATTPAPTATTTKAAPAKTTHHKKQHKAAPAQKAQ). Residues 22 to 102 (AETATTPAPT…PAKPAAQPAA (81 aa)) are disordered. Positions 80-90 (AAKKHAGKHSH) are enriched in basic residues. The span at 91–102 (QQPAKPAAQPAA) shows a compositional bias: low complexity.

Belongs to the Asr family. In terms of processing, proteolytic processing gives rise to the active protein.

It is found in the periplasm. In terms of biological role, required for growth and/or survival at acidic conditions. This Escherichia coli (strain 55989 / EAEC) protein is Acid shock protein.